Consider the following 84-residue polypeptide: Small ribosomal subunit protein uS17 (84 aa).

The protein belongs to the universal ribosomal protein uS17 family. In terms of assembly, part of the 30S ribosomal subunit.

In terms of biological role, one of the primary rRNA binding proteins, it binds specifically to the 5'-end of 16S ribosomal RNA. In Buchnera aphidicola subsp. Cinara cedri (strain Cc), this protein is Small ribosomal subunit protein uS17.